We begin with the raw amino-acid sequence, 247 residues long: MMDPIHQFNIETIFTIGHIGGQEIAFTNSSAYMLVAVVLTSLLMLATGRKLVPGRMQSIAEISYEFVADTIHTTAGKDGMKFFPFVFTIFMLVTVSNLVGIVPYTFTISSHIIVTAALAFLVFFTVLIYGFYKNGLRFFKLFVPSGIPIVILPLVVAIEVISFLSRPVSHSVRLFANMLAGHITLKVFASFVTMLGAMGIVGVFGAVLPLALVVALTALELLVAFLQAYVFTILTCIYINDAIHPGH.

Transmembrane regions (helical) follow at residues 24-44 (IAFT…SLLM), 82-102 (FFPF…VGIV), 112-132 (IIVT…YGFY), 141-161 (LFVP…IEVI), 194-214 (MLGA…ALVV), and 219-239 (LELL…CIYI).

Belongs to the ATPase A chain family. F-type ATPases have 2 components, CF(1) - the catalytic core - and CF(0) - the membrane proton channel. CF(1) has five subunits: alpha(3), beta(3), gamma(1), delta(1), epsilon(1). CF(0) has three main subunits: a(1), b(2) and c(9-12). The alpha and beta chains form an alternating ring which encloses part of the gamma chain. CF(1) is attached to CF(0) by a central stalk formed by the gamma and epsilon chains, while a peripheral stalk is formed by the delta and b chains.

The protein resides in the cell inner membrane. Its function is as follows. Key component of the proton channel; it plays a direct role in the translocation of protons across the membrane. In Nitrobacter hamburgensis (strain DSM 10229 / NCIMB 13809 / X14), this protein is ATP synthase subunit a.